Reading from the N-terminus, the 510-residue chain is Mitogen-activated protein kinase 9 (510 aa).

The Protein kinase domain occupies 23–314 (YQIQEVIGKG…AEEALADPYF (292 aa)). Residues 29–37 (IGKGSYGVV) and K52 contribute to the ATP site. The active-site Proton acceptor is D149. T185 carries the post-translational modification Phosphothreonine. A TXY motif is present at residues 185 to 187 (TDY). At Y187 the chain carries Phosphotyrosine. T190 carries the post-translational modification Phosphothreonine. The segment at 393-461 (NYGKGEKGSP…SDYRNGTSQT (69 aa)) is disordered. The span at 410–431 (LPRERVPAPKKENGSHNHDIEN) shows a compositional bias: basic and acidic residues. A compositionally biased stretch (polar residues) spans 433-461 (SIASLVTTLESPPTSQHEGSDYRNGTSQT).

This sequence belongs to the protein kinase superfamily. CMGC Ser/Thr protein kinase family. MAP kinase subfamily. Post-translationally, dually phosphorylated on Thr-185 and Tyr-187, which activates the enzyme.

It catalyses the reaction L-seryl-[protein] + ATP = O-phospho-L-seryl-[protein] + ADP + H(+). The catalysed reaction is L-threonyl-[protein] + ATP = O-phospho-L-threonyl-[protein] + ADP + H(+). Its activity is regulated as follows. Activated by threonine and tyrosine phosphorylation. The chain is Mitogen-activated protein kinase 9 (MPK9) from Arabidopsis thaliana (Mouse-ear cress).